A 435-amino-acid polypeptide reads, in one-letter code: UDP-N-acetylmuramate--L-alanine ligase (435 aa).

108–114 (GAHGKST) contacts ATP.

This sequence belongs to the MurCDEF family.

It localises to the cytoplasm. The catalysed reaction is UDP-N-acetyl-alpha-D-muramate + L-alanine + ATP = UDP-N-acetyl-alpha-D-muramoyl-L-alanine + ADP + phosphate + H(+). It functions in the pathway cell wall biogenesis; peptidoglycan biosynthesis. Cell wall formation. This Campylobacter curvus (strain 525.92) protein is UDP-N-acetylmuramate--L-alanine ligase.